The sequence spans 143 residues: Large ribosomal subunit protein uL13 (143 aa).

Belongs to the universal ribosomal protein uL13 family. Part of the 50S ribosomal subunit.

In terms of biological role, this protein is one of the early assembly proteins of the 50S ribosomal subunit, although it is not seen to bind rRNA by itself. It is important during the early stages of 50S assembly. The protein is Large ribosomal subunit protein uL13 of Dehalococcoides mccartyi (strain ATCC BAA-2266 / KCTC 15142 / 195) (Dehalococcoides ethenogenes (strain 195)).